The sequence spans 934 residues: Protein translocase subunit SecA (934 aa).

Residues Gln87, 105-109, and Asp515 each bind ATP; that span reads GEGKT. Residues Cys918, Cys920, Cys929, and His930 each contribute to the Zn(2+) site.

It belongs to the SecA family. In terms of assembly, monomer and homodimer. Part of the essential Sec protein translocation apparatus which comprises SecA, SecYEG and auxiliary proteins SecDF-YajC and YidC. The cofactor is Zn(2+).

It is found in the cell inner membrane. The protein localises to the cytoplasm. It catalyses the reaction ATP + H2O + cellular proteinSide 1 = ADP + phosphate + cellular proteinSide 2.. In terms of biological role, part of the Sec protein translocase complex. Interacts with the SecYEG preprotein conducting channel. Has a central role in coupling the hydrolysis of ATP to the transfer of proteins into and across the cell membrane, serving both as a receptor for the preprotein-SecB complex and as an ATP-driven molecular motor driving the stepwise translocation of polypeptide chains across the membrane. The sequence is that of Protein translocase subunit SecA from Ralstonia nicotianae (strain ATCC BAA-1114 / GMI1000) (Ralstonia solanacearum).